The sequence spans 513 residues: ATP synthase subunit alpha (513 aa).

Residue 169 to 176 (GDRQCGKT) participates in ATP binding.

It belongs to the ATPase alpha/beta chains family. F-type ATPases have 2 components, CF(1) - the catalytic core - and CF(0) - the membrane proton channel. CF(1) has five subunits: alpha(3), beta(3), gamma(1), delta(1), epsilon(1). CF(0) has three main subunits: a(1), b(2) and c(9-12). The alpha and beta chains form an alternating ring which encloses part of the gamma chain. CF(1) is attached to CF(0) by a central stalk formed by the gamma and epsilon chains, while a peripheral stalk is formed by the delta and b chains.

It is found in the cell inner membrane. The enzyme catalyses ATP + H2O + 4 H(+)(in) = ADP + phosphate + 5 H(+)(out). In terms of biological role, produces ATP from ADP in the presence of a proton gradient across the membrane. The alpha chain is a regulatory subunit. The sequence is that of ATP synthase subunit alpha from Burkholderia cenocepacia (strain ATCC BAA-245 / DSM 16553 / LMG 16656 / NCTC 13227 / J2315 / CF5610) (Burkholderia cepacia (strain J2315)).